The sequence spans 76 residues: MLLEFKQFLYEASIDEFMGKIASCQTLEGLEELEAYYKKRVKETELKDTDDISVRDALAGKRAELEDSDDEVEESF.

Probably interacts with UvsW.

In terms of biological role, inhibits the single-stranded annealing activity of UvsW, has no effect on UvsW helicase activity. The chain is Protein UvsW.1 from Escherichia coli (Bacteriophage T4).